Consider the following 417-residue polypeptide: Serine hydroxymethyltransferase (417 aa).

Residues L121 and 125–127 each bind (6S)-5,6,7,8-tetrahydrofolate; that span reads GHL. K229 is modified (N6-(pyridoxal phosphate)lysine). 355–357 provides a ligand contact to (6S)-5,6,7,8-tetrahydrofolate; sequence SPF.

Belongs to the SHMT family. Homodimer. Pyridoxal 5'-phosphate serves as cofactor.

The protein resides in the cytoplasm. It catalyses the reaction (6R)-5,10-methylene-5,6,7,8-tetrahydrofolate + glycine + H2O = (6S)-5,6,7,8-tetrahydrofolate + L-serine. It participates in one-carbon metabolism; tetrahydrofolate interconversion. The protein operates within amino-acid biosynthesis; glycine biosynthesis; glycine from L-serine: step 1/1. Its function is as follows. Catalyzes the reversible interconversion of serine and glycine with tetrahydrofolate (THF) serving as the one-carbon carrier. This reaction serves as the major source of one-carbon groups required for the biosynthesis of purines, thymidylate, methionine, and other important biomolecules. Also exhibits THF-independent aldolase activity toward beta-hydroxyamino acids, producing glycine and aldehydes, via a retro-aldol mechanism. The sequence is that of Serine hydroxymethyltransferase from Xylella fastidiosa (strain M12).